The sequence spans 741 residues: 1,4-alpha-glucan branching enzyme GlgB (741 aa).

The active-site Nucleophile is the aspartate 420. Glutamate 473 functions as the Proton donor in the catalytic mechanism.

The protein belongs to the glycosyl hydrolase 13 family. GlgB subfamily. As to quaternary structure, monomer.

It carries out the reaction Transfers a segment of a (1-&gt;4)-alpha-D-glucan chain to a primary hydroxy group in a similar glucan chain.. Its pathway is glycan biosynthesis; glycogen biosynthesis. In terms of biological role, catalyzes the formation of the alpha-1,6-glucosidic linkages in glycogen by scission of a 1,4-alpha-linked oligosaccharide from growing alpha-1,4-glucan chains and the subsequent attachment of the oligosaccharide to the alpha-1,6 position. This is 1,4-alpha-glucan branching enzyme GlgB from Pseudomonas syringae pv. tomato (strain ATCC BAA-871 / DC3000).